A 239-amino-acid chain; its full sequence is Putative glutamine amidotransferase-like protein YfeJ (239 aa).

Residues 1 to 200 (MRVHFVVHES…IQHSQQELAD (200 aa)) form the Glutamine amidotransferase type-1 domain.

The sequence is that of Putative glutamine amidotransferase-like protein YfeJ (yfeJ) from Salmonella typhimurium (strain LT2 / SGSC1412 / ATCC 700720).